A 1322-amino-acid chain; its full sequence is WD repeat-containing protein 17 (1322 aa).

WD repeat units lie at residues 81-121 (EHKK…VIAK), 123-164 (DSTK…SGVI), 171-211 (SFLS…QKHV), 221-261 (DEED…CITT), and 266-307 (SAAA…PIDN). The disordered stretch occupies residues 328-352 (KFSVQSPTKNHYTSSTSEAVPPPTL). The span at 330–345 (SVQSPTKNHYTSSTSE) shows a compositional bias: polar residues. WD repeat units lie at residues 391–431 (GHVE…AVYT), 434–474 (GNEG…IIQR), 478–518 (HGTN…LHKY), 519–559 (KHPA…DQPL), 564–604 (GHTA…CINI), 607–647 (GHTA…CVDT), and 650–690 (DHGA…TPVQ).

The protein is WD repeat-containing protein 17 (WDR17) of Homo sapiens (Human).